The primary structure comprises 244 residues: MKFGKLLKRQIEQSLPEWRDKFVSYKELKRIVASISGSPADEAAFVAALAADIDKIDSFFLEQEEEFVIRHRARTPIRFNSFELQEAIKKAAEAAAEVAGIRREIVDFHGEMVLLLSYSSINYIGVGKILKKHDKRTGGALAAPVAEAVRERRHFFKTETVSRMVRECEAMMAEAAVLPAEAAPEALAAAAEHGIFRNTVAALLTMEDVRRGSSTHGRHSLPPLTLPDSDWLRSFQPPSPIPIQ.

One can recognise an SPX domain in the interval 1 to 147; that stretch reads MKFGKLLKRQ…GGALAAPVAE (147 aa). Positions 212-244 are disordered; sequence GSSTHGRHSLPPLTLPDSDWLRSFQPPSPIPIQ.

In Oryza sativa subsp. indica (Rice), this protein is SPX domain-containing protein 6 (SPX6).